An 85-amino-acid chain; its full sequence is Small ribosomal subunit protein uS17 (85 aa).

Belongs to the universal ribosomal protein uS17 family. As to quaternary structure, part of the 30S ribosomal subunit.

In terms of biological role, one of the primary rRNA binding proteins, it binds specifically to the 5'-end of 16S ribosomal RNA. The chain is Small ribosomal subunit protein uS17 from Trichlorobacter lovleyi (strain ATCC BAA-1151 / DSM 17278 / SZ) (Geobacter lovleyi).